The primary structure comprises 134 residues: Large ribosomal subunit protein uL16c (134 aa).

Belongs to the universal ribosomal protein uL16 family. Part of the 50S ribosomal subunit.

The protein localises to the plastid. It localises to the chloroplast. The polypeptide is Large ribosomal subunit protein uL16c (Gnetum parvifolium (Small-leaved jointfir)).